A 35-amino-acid chain; its full sequence is ECKKLFGGCTTSSECCAHLGCKQKWPFYCAWDWSF.

Intrachain disulfides connect cysteine 2-cysteine 16, cysteine 9-cysteine 21, and cysteine 15-cysteine 29.

This sequence belongs to the neurotoxin 10 (Hwtx-1) family. 48 (Jztx-F5) subfamily. Expressed by the venom gland.

Its subcellular location is the secreted. Probable ion channel inhibitor. The chain is Jingzhaotoxin F5-21.66 from Chilobrachys guangxiensis (Chinese earth tiger tarantula).